Here is a 229-residue protein sequence, read N- to C-terminus: MKIGIVGAMKQEVEILANLMRNQTVTQVAGCTIYEGLINGKQVALLQSGIGKVAAAIGTTALLQLAKPDVVLNTGSAGGVADGLKVGDIVISTETAYHDADVTAFGYAKGQLPACPATFISDEKLTALAKQVAQAQGHNVKRGLICSGDSFIAGGERLAQIKADFPNVTAVEMEAAAIAQVCHVFRVPFVVVRAISDAGDGQAGMSFEEFLPIAAKQSSAMIIGMLEQL.

The active-site Proton acceptor is Glu12. Substrate contacts are provided by residues Gly78, Ile152, and 173–174; that span reads ME. Asp197 (proton donor) is an active-site residue.

The protein belongs to the PNP/UDP phosphorylase family. MtnN subfamily.

It catalyses the reaction S-adenosyl-L-homocysteine + H2O = S-(5-deoxy-D-ribos-5-yl)-L-homocysteine + adenine. It carries out the reaction S-methyl-5'-thioadenosine + H2O = 5-(methylsulfanyl)-D-ribose + adenine. The catalysed reaction is 5'-deoxyadenosine + H2O = 5-deoxy-D-ribose + adenine. It functions in the pathway amino-acid biosynthesis; L-methionine biosynthesis via salvage pathway; S-methyl-5-thio-alpha-D-ribose 1-phosphate from S-methyl-5'-thioadenosine (hydrolase route): step 1/2. In terms of biological role, catalyzes the irreversible cleavage of the glycosidic bond in both 5'-methylthioadenosine (MTA) and S-adenosylhomocysteine (SAH/AdoHcy) to adenine and the corresponding thioribose, 5'-methylthioribose and S-ribosylhomocysteine, respectively. Also cleaves 5'-deoxyadenosine, a toxic by-product of radical S-adenosylmethionine (SAM) enzymes, into 5-deoxyribose and adenine. The sequence is that of 5'-methylthioadenosine/S-adenosylhomocysteine nucleosidase from Mannheimia succiniciproducens (strain KCTC 0769BP / MBEL55E).